A 118-amino-acid chain; its full sequence is Large ribosomal subunit protein uL22 (118 aa).

This sequence belongs to the universal ribosomal protein uL22 family. Part of the 50S ribosomal subunit.

In terms of biological role, this protein binds specifically to 23S rRNA; its binding is stimulated by other ribosomal proteins, e.g. L4, L17, and L20. It is important during the early stages of 50S assembly. It makes multiple contacts with different domains of the 23S rRNA in the assembled 50S subunit and ribosome. The globular domain of the protein is located near the polypeptide exit tunnel on the outside of the subunit, while an extended beta-hairpin is found that lines the wall of the exit tunnel in the center of the 70S ribosome. The chain is Large ribosomal subunit protein uL22 from Leuconostoc mesenteroides subsp. mesenteroides (strain ATCC 8293 / DSM 20343 / BCRC 11652 / CCM 1803 / JCM 6124 / NCDO 523 / NBRC 100496 / NCIMB 8023 / NCTC 12954 / NRRL B-1118 / 37Y).